The sequence spans 341 residues: Ketol-acid reductoisomerase (NADP(+)) (341 aa).

One can recognise a KARI N-terminal Rossmann domain in the interval 1–182 (MATIYYDKDA…GCTRAGVLET (182 aa)). Residues 25 to 28 (YGSQ), Ser51, Ser53, and 83 to 86 (DQTQ) contribute to the NADP(+) site. Residue His108 is part of the active site. Gly134 contacts NADP(+). Residues 183–328 (TFKEETETDL…KRLRDMMSWI (146 aa)) form the KARI C-terminal knotted domain. The Mg(2+) site is built by Asp191, Glu195, Glu227, and Glu231. Position 252 (Ser252) interacts with substrate.

The protein belongs to the ketol-acid reductoisomerase family. It depends on Mg(2+) as a cofactor.

The enzyme catalyses (2R)-2,3-dihydroxy-3-methylbutanoate + NADP(+) = (2S)-2-acetolactate + NADPH + H(+). It catalyses the reaction (2R,3R)-2,3-dihydroxy-3-methylpentanoate + NADP(+) = (S)-2-ethyl-2-hydroxy-3-oxobutanoate + NADPH + H(+). The protein operates within amino-acid biosynthesis; L-isoleucine biosynthesis; L-isoleucine from 2-oxobutanoate: step 2/4. It participates in amino-acid biosynthesis; L-valine biosynthesis; L-valine from pyruvate: step 2/4. Its function is as follows. Involved in the biosynthesis of branched-chain amino acids (BCAA). Catalyzes an alkyl-migration followed by a ketol-acid reduction of (S)-2-acetolactate (S2AL) to yield (R)-2,3-dihydroxy-isovalerate. In the isomerase reaction, S2AL is rearranged via a Mg-dependent methyl migration to produce 3-hydroxy-3-methyl-2-ketobutyrate (HMKB). In the reductase reaction, this 2-ketoacid undergoes a metal-dependent reduction by NADPH to yield (R)-2,3-dihydroxy-isovalerate. The sequence is that of Ketol-acid reductoisomerase (NADP(+)) from Anaeromyxobacter sp. (strain K).